Consider the following 60-residue polypeptide: Large ribosomal subunit protein bL33 (60 aa).

Belongs to the bacterial ribosomal protein bL33 family.

In Chlorobium luteolum (strain DSM 273 / BCRC 81028 / 2530) (Pelodictyon luteolum), this protein is Large ribosomal subunit protein bL33.